The chain runs to 139 residues: HTH-type transcriptional regulator MntR (139 aa).

The HTH dtxR-type domain occupies Met1–Thr63. Mn(2+)-binding residues include Asp8, Glu11, His77, Glu99, Glu102, and His103.

The protein belongs to the DtxR/MntR family. As to quaternary structure, homodimer.

The protein resides in the cytoplasm. Its activity is regulated as follows. DNA binding is strongly activated by Mn(2+). Functionally, central regulator of manganese homeostasis. In Lysinibacillus sphaericus (strain C3-41), this protein is HTH-type transcriptional regulator MntR.